Here is a 128-residue protein sequence, read N- to C-terminus: Prefoldin subunit 1 (128 aa).

Coiled coils occupy residues 17-37 (MIEL…KEGD) and 81-115 (LKDS…LLQQ).

This sequence belongs to the prefoldin subunit beta family. Heterohexamer of two PFD-alpha type and four PFD-beta type subunits forming prefoldin co-chaperone complex. Interacts with LSM8, a specific subunit of the LSM2-8 complex, which is a core component of the spliceosome.

Its subcellular location is the cytoplasm. It is found in the nucleus. Binds specifically to cytosolic chaperonin (c-CPN) and transfers target proteins to it. Binds to nascent polypeptide chain and promotes folding in an environment in which there are many competing pathways for nonnative proteins. Together with other chaperonins, contribute to the regulation of gene expression by modulating the spliceosome function on pre-mRNA splicing post-transcriptionally by acting as a co-chaperone of Hsp90 to control levels of LSM8. Required for microtubules (MTs) organization and dynamicity. Involved in the process leading to microtubules dissociation in response to gibberellic acid (GA) probably due to the DELLA proteins-mediated translocation of the prefoldin co-chaperone complex from the cytoplasm to the nucleus. The sequence is that of Prefoldin subunit 1 from Arabidopsis thaliana (Mouse-ear cress).